The following is a 260-amino-acid chain: Snake venom serine protease serpentokallikrein-1 (260 aa).

A signal peptide spans 1-18 (MVLIRVLANLLILQLSYA). A propeptide spanning residues 19–24 (QRTSEL) is cleaved from the precursor. One can recognise a Peptidase S1 domain in the interval 25–251 (VIGGDECNIN…HLDWIKSIIA (227 aa)). 6 disulfide bridges follow: Cys-31-Cys-165, Cys-52-Cys-68, Cys-102-Cys-258, Cys-144-Cys-212, Cys-176-Cys-191, and Cys-202-Cys-227. The Charge relay system role is filled by His-67. Residues Asn-81 and Asn-105 are each glycosylated (N-linked (GlcNAc...) asparagine). Asp-112 acts as the Charge relay system in catalysis. 2 N-linked (GlcNAc...) asparagine glycosylation sites follow: Asn-156 and Asn-172. The active-site Charge relay system is Ser-206.

The protein belongs to the peptidase S1 family. Snake venom subfamily. Monomer. Expressed by the venom gland.

It localises to the secreted. Functionally, snake venom serine protease that may act in the hemostasis system of the prey. In Protobothrops mucrosquamatus (Taiwan habu), this protein is Snake venom serine protease serpentokallikrein-1.